A 215-amino-acid chain; its full sequence is UPF0502 protein YceH (215 aa).

Lys-80 is subject to N6-acetyllysine.

It belongs to the UPF0502 family.

The sequence is that of UPF0502 protein YceH from Escherichia fergusonii (strain ATCC 35469 / DSM 13698 / CCUG 18766 / IAM 14443 / JCM 21226 / LMG 7866 / NBRC 102419 / NCTC 12128 / CDC 0568-73).